A 425-amino-acid polypeptide reads, in one-letter code: Ribulose bisphosphate carboxylase (425 aa).

Catalysis depends on K153, which acts as the Proton acceptor. A substrate-binding site is contributed by K155. Mg(2+) contacts are provided by K179, D181, and E182. Residue K179 is modified to N6-carboxylysine. Residue H269 is the Proton acceptor of the active site. Substrate contacts are provided by residues R270, H302, 353–355 (SGG), and 375–378 (QAGG).

This sequence belongs to the RuBisCO large chain family. Type III subfamily. In terms of assembly, homodimer. In contrast to form I RuBisCO, the form III RuBisCO is composed solely of large subunits. The cofactor is Mg(2+).

The catalysed reaction is 2 (2R)-3-phosphoglycerate + 2 H(+) = D-ribulose 1,5-bisphosphate + CO2 + H2O. It carries out the reaction D-ribulose 1,5-bisphosphate + O2 = 2-phosphoglycolate + (2R)-3-phosphoglycerate + 2 H(+). With respect to regulation, reversibly inhibited by O(2). Its function is as follows. Catalyzes the addition of molecular CO(2) and H(2)O to ribulose 1,5-bisphosphate (RuBP), generating two molecules of 3-phosphoglycerate (3-PGA). Functions in an archaeal AMP degradation pathway, together with AMP phosphorylase and R15P isomerase. This chain is Ribulose bisphosphate carboxylase, found in Methanocaldococcus jannaschii (strain ATCC 43067 / DSM 2661 / JAL-1 / JCM 10045 / NBRC 100440) (Methanococcus jannaschii).